We begin with the raw amino-acid sequence, 39 residues long: Cytochrome b559 subunit beta (39 aa).

The chain crosses the membrane as a helical span at residues 14–30; sequence WLAVHGLAVPTVFFLGS. Residue H18 coordinates heme.

It belongs to the PsbE/PsbF family. As to quaternary structure, heterodimer of an alpha subunit and a beta subunit. PSII is composed of 1 copy each of membrane proteins PsbA, PsbB, PsbC, PsbD, PsbE, PsbF, PsbH, PsbI, PsbJ, PsbK, PsbL, PsbM, PsbT, PsbX, PsbY, PsbZ, Psb30/Ycf12, at least 3 peripheral proteins of the oxygen-evolving complex and a large number of cofactors. It forms dimeric complexes. It depends on heme b as a cofactor.

The protein localises to the plastid membrane. Functionally, this b-type cytochrome is tightly associated with the reaction center of photosystem II (PSII). PSII is a light-driven water:plastoquinone oxidoreductase that uses light energy to abstract electrons from H(2)O, generating O(2) and a proton gradient subsequently used for ATP formation. It consists of a core antenna complex that captures photons, and an electron transfer chain that converts photonic excitation into a charge separation. This is Cytochrome b559 subunit beta from Cuscuta europaea (European dodder).